Reading from the N-terminus, the 938-residue chain is Phosphoenolpyruvate carboxylase (938 aa).

Catalysis depends on residues His-151 and Lys-591.

Belongs to the PEPCase type 1 family. It depends on Mg(2+) as a cofactor.

It catalyses the reaction oxaloacetate + phosphate = phosphoenolpyruvate + hydrogencarbonate. Forms oxaloacetate, a four-carbon dicarboxylic acid source for the tricarboxylic acid cycle. The protein is Phosphoenolpyruvate carboxylase of Roseiflexus castenholzii (strain DSM 13941 / HLO8).